The chain runs to 349 residues: MNTRTDVTNDNIDKNPTKRGNKNIPGRNERFNDRNRFNNDGNNRPRLQPSPPPRQDNKCREENGDFINIRLCAYEKEYCNDGYLSPAYYMLKQVDDEEMSCWSELSSLVRSKKAVGFPLLKAAKRISHGSMLYFEQFKNSKVVRLTPQVKCLNDTVIFQTVVILYSMYKRDIYSNEFCFDLVSIPRTNIVFSVNQLMFNICTDILVVLSICGNRLYRTNLPQSCYLNFIHGHETIACRGYEHSNYFFEWLIKNHLSLLTKQTMDILKVKKKYATGAPVNRLLEPGTLVYVPKEDYYFIGISLTDVSISDNVRVLFSTDGIVLEIEDFNIKHLFMAGEMFVRSQSSTIIV.

A compositionally biased stretch (polar residues) spans 1-10; the sequence is MNTRTDVTND. Residues 1-60 are disordered; the sequence is MNTRTDVTNDNIDKNPTKRGNKNIPGRNERFNDRNRFNNDGNNRPRLQPSPPPRQDNKCR. Residues 27–37 show a composition bias toward basic and acidic residues; it reads RNERFNDRNRF. The segment covering 38-47 has biased composition (low complexity); sequence NNDGNNRPRL.

It belongs to the orthopoxvirus OPG097 family.

It is found in the virion. The protein localises to the host cytoplasm. Its function is as follows. Might be required to be present in the virion for transcription of early genes after primo infection. The polypeptide is Protein OPG097 (OPG097) (Homo sapiens (Human)).